The primary structure comprises 128 residues: Cytochrome c-type biogenesis protein CcmE (128 aa).

Topologically, residues 1–8 (MQKRVRNR) are cytoplasmic. The helical; Signal-anchor for type II membrane protein transmembrane segment at 9–29 (LITIIICFCSAFLGIGIILYN) threads the bilayer. Residues 30-128 (LENNIVFFLP…KHDENYRPTR (99 aa)) lie on the Periplasmic side of the membrane. Positions 120 and 124 each coordinate heme.

Belongs to the CcmE/CycJ family.

The protein localises to the cell inner membrane. Functionally, heme chaperone required for the biogenesis of c-type cytochromes. Transiently binds heme delivered by CcmC and transfers the heme to apo-cytochromes in a process facilitated by CcmF and CcmH. The sequence is that of Cytochrome c-type biogenesis protein CcmE from Rickettsia canadensis (strain McKiel).